Here is a 714-residue protein sequence, read N- to C-terminus: MELENIVANTVYLKAREGGSDSNKGKSKKWRKILQFPHISQCINLKDKLDISYGYVIDQQPIGRELFRLFCENKRPVYFRYITFLDEVVKYEIEYISNRIFIGHDIGRRFLDVEAQLELRNGSGGDALDAETQEELLLNSSNANPTETAETEHCNNTTANNCNNINNSNNSQHSSDINHKKLDTRNHNGDDATGNGSSHQDDGDESVKCQEGHDDAEKGGGGEGGGGGKCVPVGGYPDELVLDVLNDDLIAQVRNKLNSGGKDIFAQCVNAVKAFLAGEPFREFESSMYFHRYLQWKWLEAQPITYKTFRMYRVLGKGGFGEVCACQVRATGKMYACKKLEKKRIKKRKGESMVLIEKQILQKINSPFVVNLAYAYETKDALCLVLTIMNGGDLKFHIYNMGGEPGFELERARFYAAEVACGLQHLHKQGIVYRDCKPENILLDDHGHVRISDLGLAVEIPEGEMVRGRVGTVGYMAPEVIDNEKYAFSPDWFSFGCLLYEMIEGQAPFRMRKEKVKREEVDRRVKEDPEKYSSKFNDEAKSMCQQLLAKSIKQRLGCRNGRMGGQDVMAHPFFHSTQLNWRRLEAGMLEPPFVPDPHAVYAKDVLDIEQFSTVKGVNIDESDTNFYTKFNTGSVSISWQNEMMETECFRELNVFGPEECPTPDLQINAAPEPDKAGCFPFRRKKKQPARTQPIPIPEHLLTTSHSVSSTTVES.

The tract at residues 1–308 is N-terminal; that stretch reads MELENIVANT…LEAQPITYKT (308 aa). RGS domains lie at 53–174 and 177–294; these read YGYV…SQHS and INHK…HRYL. Residues 141 to 229 are disordered; that stretch reads SNANPTETAE…GGGEGGGGGK (89 aa). Residues 154–175 show a composition bias toward low complexity; it reads CNNTTANNCNNINNSNNSQHSS. Composition is skewed to basic and acidic residues over residues 176–190 and 199–220; these read DINH…HNGD and HQDD…EKGG. The 266-residue stretch at 309–574 folds into the Protein kinase domain; sequence FRMYRVLGKG…GQDVMAHPFF (266 aa). ATP is bound by residues 315-323 and Lys338; that span reads LGKGGFGEV. The active-site Proton acceptor is Asp435. Positions 577 to 642 constitute an AGC-kinase C-terminal domain; that stretch reads TQLNWRRLEA…GSVSISWQNE (66 aa). Ser612 is modified (phosphoserine). Thr613 bears the Phosphothreonine mark. The interval 667 to 714 is disordered; sequence INAAPEPDKAGCFPFRRKKKQPARTQPIPIPEHLLTTSHSVSSTTVES. Positions 698–714 are enriched in low complexity; it reads EHLLTTSHSVSSTTVES.

It belongs to the protein kinase superfamily. AGC Ser/Thr protein kinase family. GPRK subfamily. In terms of tissue distribution, expressed in all larval tissues and in adult ovaries. Larval CNS staining is localized to axons projecting to the optic lobes and the mushroom bodies, in the longitudinal connectives, and in cell bodies and nerves of the ring gland corpus allatum. Adult CNS staining is detectable only in cell bodies and processes associated with the ellipsoid body of the central complex and portions of the mushroom bodies. In the wing disk, expression is confined to a stripe that parallels the anterior/posterior boundary of the wing blade and the hinge region, and weak expression in the prospective notum.

The protein localises to the membrane. The catalysed reaction is [G-protein-coupled receptor] + ATP = [G-protein-coupled receptor]-phosphate + ADP + H(+). Its function is as follows. Specifically phosphorylates the activated forms of G protein-coupled receptors. Required during oogenesis and embryogenesis; component of a signaling pathway that functions during egg chamber maturation. This Drosophila melanogaster (Fruit fly) protein is G protein-coupled receptor kinase 2 (Gprk2).